Reading from the N-terminus, the 352-residue chain is Histidine biosynthesis bifunctional protein HisB (352 aa).

Residues 1–164 (MSQKILFIDR…EIENEILSSF (164 aa)) are histidinol-phosphatase. Asp-9 (nucleophile) is an active-site residue. The Mg(2+) site is built by Asp-9 and Asp-11. Residue Asp-11 is the Proton donor of the active site. Zn(2+) is bound by residues Cys-93, His-95, Cys-101, and Cys-103. Asp-130 serves as a coordination point for Mg(2+). The tract at residues 165-352 (RSASYQRTTK…ENLASSKGVI (188 aa)) is imidazoleglycerol-phosphate dehydratase.

This sequence in the N-terminal section; belongs to the histidinol-phosphatase family. It in the C-terminal section; belongs to the imidazoleglycerol-phosphate dehydratase family. The cofactor is Mg(2+). It depends on Zn(2+) as a cofactor.

The protein localises to the cytoplasm. It catalyses the reaction D-erythro-1-(imidazol-4-yl)glycerol 3-phosphate = 3-(imidazol-4-yl)-2-oxopropyl phosphate + H2O. It carries out the reaction L-histidinol phosphate + H2O = L-histidinol + phosphate. It functions in the pathway amino-acid biosynthesis; L-histidine biosynthesis; L-histidine from 5-phospho-alpha-D-ribose 1-diphosphate: step 6/9. Its pathway is amino-acid biosynthesis; L-histidine biosynthesis; L-histidine from 5-phospho-alpha-D-ribose 1-diphosphate: step 8/9. This Campylobacter jejuni subsp. jejuni serotype O:2 (strain ATCC 700819 / NCTC 11168) protein is Histidine biosynthesis bifunctional protein HisB.